The primary structure comprises 329 residues: MSEEFPTPQLLDELEDQQKVTTPNEKRELSSNRVLKDIFAGTIGGIAQVLVGQPFDTTKVRLQTATTRTTTLEVLRNLVKNEGVFAFYKGALTPLLGVGICVSVQFGVNEAMKRFFQNYNASKNPNMSSQDVDLSRSNTLPLSQYYVCGLTGGVVNSFLASPIEQIRIRLQTQTSNGGDREFKGPWDCIKKLKAQGGLMRGLFPTMIRAGHGLGTYFLVYEALVAREIGTGLTRNEIPPWKLCLFGAFSGTMLWLTVYPLDVVKSIIQNDDLRKPKYKNSISYVAKTIYAKEGIRAFFKGFGPTMVRSAPVNGATFLTFELVMRFLGEE.

The tract at residues Met1–Arg27 is disordered. The transit peptide at Met1–Arg33 directs the protein to the mitochondrion. Solcar repeat units lie at residues Val34 to Phe115, Ser143 to Arg226, and Pro238 to Phe325. The next 6 membrane-spanning stretches (helical) occupy residues Ile38 to Thr58, Val84 to Val104, Leu140 to Ala160, Thr205 to Ala225, Cys243 to Val263, and Phe297 to Thr318.

The protein belongs to the mitochondrial carrier (TC 2.A.29) family.

It is found in the mitochondrion inner membrane. This chain is Carrier protein YMC2, mitochondrial (YMC2), found in Saccharomyces cerevisiae (strain ATCC 204508 / S288c) (Baker's yeast).